Reading from the N-terminus, the 292-residue chain is ATP synthase gamma chain (292 aa).

The protein belongs to the ATPase gamma chain family. F-type ATPases have 2 components, CF(1) - the catalytic core - and CF(0) - the membrane proton channel. CF(1) has five subunits: alpha(3), beta(3), gamma(1), delta(1), epsilon(1). CF(0) has three main subunits: a, b and c.

The protein localises to the cell inner membrane. Functionally, produces ATP from ADP in the presence of a proton gradient across the membrane. The gamma chain is believed to be important in regulating ATPase activity and the flow of protons through the CF(0) complex. In Nitrobacter winogradskyi (strain ATCC 25391 / DSM 10237 / CIP 104748 / NCIMB 11846 / Nb-255), this protein is ATP synthase gamma chain.